The following is a 284-amino-acid chain: Bifunctional protein FolD 2 (284 aa).

NADP(+)-binding positions include 166–168 and Ile-232; that span reads GAS.

The protein belongs to the tetrahydrofolate dehydrogenase/cyclohydrolase family. Homodimer.

It carries out the reaction (6R)-5,10-methylene-5,6,7,8-tetrahydrofolate + NADP(+) = (6R)-5,10-methenyltetrahydrofolate + NADPH. The catalysed reaction is (6R)-5,10-methenyltetrahydrofolate + H2O = (6R)-10-formyltetrahydrofolate + H(+). It functions in the pathway one-carbon metabolism; tetrahydrofolate interconversion. Its function is as follows. Catalyzes the oxidation of 5,10-methylenetetrahydrofolate to 5,10-methenyltetrahydrofolate and then the hydrolysis of 5,10-methenyltetrahydrofolate to 10-formyltetrahydrofolate. This chain is Bifunctional protein FolD 2, found in Colwellia psychrerythraea (strain 34H / ATCC BAA-681) (Vibrio psychroerythus).